Reading from the N-terminus, the 101-residue chain is Ascorbate-specific PTS system EIIB component (101 aa).

A PTS EIIB type-2 domain is found at 3–96 (VRILAVCGNG…KLLEVIKAHF (94 aa)). Catalysis depends on Cys-9, which acts as the Phosphocysteine intermediate. Cys-9 carries the phosphocysteine modification.

It is found in the cytoplasm. The enzyme catalyses N(pros)-phospho-L-histidyl-[protein] + L-ascorbate(out) = L-ascorbate 6-phosphate(in) + L-histidyl-[protein]. In terms of biological role, the phosphoenolpyruvate-dependent sugar phosphotransferase system (sugar PTS), a major carbohydrate active transport system, catalyzes the phosphorylation of incoming sugar substrates concomitantly with their translocation across the cell membrane. The enzyme II UlaABC PTS system is involved in ascorbate transport. The protein is Ascorbate-specific PTS system EIIB component (ulaB) of Shigella sonnei (strain Ss046).